The sequence spans 2040 residues: Apolipoprotein(a) (2040 aa).

The first 19 residues, 1 to 19, serve as a signal peptide directing secretion; it reads MEHKEVVLLLLLFLKSAAP. Kringle domains lie at 27–105, 141–219, 255–333, 369–447, 483–561, 597–675, 711–789, 825–903, 939–1017, and 1053–1131; these read DCYH…LTQC, ECYH…LTQC, ECYH…LTRC, and DCYY…LTQC. Disulfide bonds link C28-C105, C49-C88, C77-C100, C142-C219, C163-C202, C191-C214, C256-C333, C277-C316, C305-C328, C370-C447, C391-C430, C419-C442, C484-C561, C505-C544, C533-C556, C598-C675, C619-C658, C647-C670, C712-C789, C733-C772, C761-C784, C826-C903, C847-C886, C875-C898, C940-C1017, C961-C1000, C989-C1012, C1054-C1131, C1075-C1114, and C1103-C1126. N-linked (GlcNAc...) asparagine glycosylation occurs at N61. N101 carries N-linked (GlcNAc...) asparagine glycosylation. N215 is a glycosylation site (N-linked (GlcNAc...) asparagine). N329 carries an N-linked (GlcNAc...) asparagine glycan. The N-linked (GlcNAc...) asparagine glycan is linked to N443. N557 carries N-linked (GlcNAc...) asparagine glycosylation. N671 carries N-linked (GlcNAc...) asparagine glycosylation. An N-linked (GlcNAc...) asparagine glycan is attached at N785. N-linked (GlcNAc...) asparagine glycosylation is present at N899. N-linked (GlcNAc...) asparagine glycosylation occurs at N1013. N-linked (GlcNAc...) asparagine glycosylation is present at N1127. Residues 1147–1166 are disordered; sequence DPSTEASSEEAPTEQSPGVQ. 2 consecutive Kringle domains span residues 1167–1245 and 1273–1351; these read DCYH…LTQC. 6 disulfides stabilise this stretch: C1168/C1245, C1189/C1228, C1217/C1240, C1274/C1351, C1295/C1334, and C1323/C1346. N-linked (GlcNAc...) asparagine glycosylation is present at N1241. 2 N-linked (GlcNAc...) asparagine glycosylation sites follow: N1347 and N1381. Residues 1365–1388 are disordered; sequence VPVPSTELPSEEAPTENSTGVQDC. The 79-residue stretch at 1387-1465 folds into the Kringle 13 domain; that stretch reads DCYRGDGQSY…RWEYCNLTRC (79 aa). Intrachain disulfides connect C1388–C1465, C1409–C1448, and C1437–C1460. N1461 is a glycosylation site (N-linked (GlcNAc...) asparagine). The interval 1476-1497 is disordered; that stretch reads PTVAPVPSTEAPSEQAPPEKSP. 3 consecutive Kringle domains span residues 1501-1579, 1615-1693, and 1719-1799; these read DCYH…LTQC, QCYH…LTRC, and DCMF…IPLC. 10 cysteine pairs are disulfide-bonded: C1502–C1579, C1523–C1562, C1551–C1574, C1616–C1693, C1637–C1676, C1665–C1688, C1720–C1799, C1741–C1782, C1770–C1794, and C1846–C1862. N1575 carries N-linked (GlcNAc...) asparagine glycosylation. N1689 is a glycosylation site (N-linked (GlcNAc...) asparagine). In terms of domain architecture, Peptidase S1 spans 1820–2038; sequence IVGGCVAHPH…FVTWIEGMMR (219 aa). Catalysis depends on charge relay system residues H1861 and D1904. Cystine bridges form between C1938/C1996, C1968/C1975, and C1986/C2014. S1990 serves as the catalytic Charge relay system.

Belongs to the peptidase S1 family. Plasminogen subfamily. Disulfide-linked to apo-B100. Binds to fibronectin and decorin. In terms of processing, N- and O-glycosylated. The N-glycans are complex biantennary structures present in either a mono- or disialylated state. The O-glycans are mostly (80%) represented by the monosialylated core type I structure, NeuNAcalpha2-3Galbeta1-3GalNAc, with smaller amounts of disialylated and non-sialylated O-glycans also detected.

Functionally, apo(a) is the main constituent of lipoprotein(a) (Lp(a)). It has serine proteinase activity and is able of autoproteolysis. Inhibits tissue-type plasminogen activator 1. Lp(a) may be a ligand for megalin/Gp 330. The sequence is that of Apolipoprotein(a) (LPA) from Homo sapiens (Human).